The primary structure comprises 246 residues: Homeobox protein SIX6 (246 aa).

Positions 126–186 (WDGEQKTHCF…KNRRQRDRAA (61 aa)) form a DNA-binding region, homeobox. A compositionally biased stretch (polar residues) spans 195–204 (QVLAQGSGRS). A disordered region spans residues 195–246 (QVLAQGSGRSLQAEEESGGEAGGAASSPAVSLSSKAATSAISITSSDSECDI). Low complexity predominate over residues 217 to 246 (GAASSPAVSLSSKAATSAISITSSDSECDI).

It belongs to the SIX/Sine oculis homeobox family. In the developing embryo, expressed in the anterior head-fold, the anterior neural plate and optic vesicle. At later stages expression is maintained in the eye, while brain expression becomes limited. Not expressed in the lens placode.

The protein resides in the nucleus. Functionally, may be involved in eye development. The polypeptide is Homeobox protein SIX6 (SIX6) (Gallus gallus (Chicken)).